Reading from the N-terminus, the 311-residue chain is MEFSTQQTPFLSFNREQWAELRKSVPLKLTEQDLKPLLGFNEDLSLDEVSTIYLPLTRLINYYIDENLHRQTVLHRFLGRNNAKTPYIISIAGSVAVGKSTSARILQSLLSHWPTERKVDLITTDGFLYPLNKLKQDNLLQKKGFPVSYDTPKLIRFLADVKSGKSNVTAPIYSHLTYDIIPDKFDVVDKPDILILEGLNVLQTGNNKTDQTFVSDFVDFSIYVDAEEKLLKEWYIKRFLKFRESAFNDPNSYFKHYASLSKEEAIATASKIWDEINGLNLNQNILPTRERANLILKKGHNHQVELIKLRK.

Residue 93–100 (GSVAVGKS) participates in ATP binding.

The protein belongs to the prokaryotic pantothenate kinase family.

The protein localises to the cytoplasm. It catalyses the reaction (R)-pantothenate + ATP = (R)-4'-phosphopantothenate + ADP + H(+). It functions in the pathway cofactor biosynthesis; coenzyme A biosynthesis; CoA from (R)-pantothenate: step 1/5. The protein is Pantothenate kinase (coaA) of Haemophilus influenzae (strain ATCC 51907 / DSM 11121 / KW20 / Rd).